Here is a 100-residue protein sequence, read N- to C-terminus: Protein translation factor SUI1 homolog (100 aa).

It belongs to the SUI1 family.

This chain is Protein translation factor SUI1 homolog, found in Thermoplasma volcanium (strain ATCC 51530 / DSM 4299 / JCM 9571 / NBRC 15438 / GSS1).